A 605-amino-acid polypeptide reads, in one-letter code: DNA primase (605 aa).

A CHC2-type zinc finger spans residues 38 to 62 (CPFHDEKTPSFTVSEDKQICHCFGC). The region spanning 260 to 341 (DEIVLLEGFM…NVFVIQLPSG (82 aa)) is the Toprim domain. Residues Glu-266, Asp-310, and Asp-312 each contribute to the Mg(2+) site.

This sequence belongs to the DnaG primase family. As to quaternary structure, monomer. Interacts with DnaB. Zn(2+) is required as a cofactor. It depends on Mg(2+) as a cofactor.

The enzyme catalyses ssDNA + n NTP = ssDNA/pppN(pN)n-1 hybrid + (n-1) diphosphate.. Its function is as follows. RNA polymerase that catalyzes the synthesis of short RNA molecules used as primers for DNA polymerase during DNA replication. The chain is DNA primase from Staphylococcus aureus (strain MW2).